A 451-amino-acid chain; its full sequence is Phosphoglucosamine mutase (451 aa).

Catalysis depends on serine 101, which acts as the Phosphoserine intermediate. The Mg(2+) site is built by serine 101, aspartate 240, aspartate 242, and aspartate 244. Serine 101 bears the Phosphoserine mark.

Belongs to the phosphohexose mutase family. Requires Mg(2+) as cofactor. Post-translationally, activated by phosphorylation.

The catalysed reaction is alpha-D-glucosamine 1-phosphate = D-glucosamine 6-phosphate. Its function is as follows. Catalyzes the conversion of glucosamine-6-phosphate to glucosamine-1-phosphate. The chain is Phosphoglucosamine mutase from Streptococcus pyogenes serotype M2 (strain MGAS10270).